The following is a 617-amino-acid chain: Proline--tRNA ligase (617 aa).

It belongs to the class-II aminoacyl-tRNA synthetase family. ProS type 1 subfamily. As to quaternary structure, homodimer.

The protein resides in the cytoplasm. The enzyme catalyses tRNA(Pro) + L-proline + ATP = L-prolyl-tRNA(Pro) + AMP + diphosphate. Its function is as follows. Catalyzes the attachment of proline to tRNA(Pro) in a two-step reaction: proline is first activated by ATP to form Pro-AMP and then transferred to the acceptor end of tRNA(Pro). As ProRS can inadvertently accommodate and process non-cognate amino acids such as alanine and cysteine, to avoid such errors it has two additional distinct editing activities against alanine. One activity is designated as 'pretransfer' editing and involves the tRNA(Pro)-independent hydrolysis of activated Ala-AMP. The other activity is designated 'posttransfer' editing and involves deacylation of mischarged Ala-tRNA(Pro). The misacylated Cys-tRNA(Pro) is not edited by ProRS. In Streptococcus agalactiae serotype III (strain NEM316), this protein is Proline--tRNA ligase.